We begin with the raw amino-acid sequence, 182 residues long: Putative manganese efflux pump MntP (182 aa).

Helical transmembrane passes span 6-26, 37-57, 71-91, 101-121, 131-151, and 162-182; these read LIPL…VSLG, ILYI…IGMV, HFAG…SSIL, IGIS…SVGL, IITI…GLFI, and YGEI…LFPI.

It belongs to the MntP (TC 9.B.29) family.

It localises to the cell membrane. Functionally, probably functions as a manganese efflux pump. This Bacillus thuringiensis subsp. konkukian (strain 97-27) protein is Putative manganese efflux pump MntP.